Reading from the N-terminus, the 281-residue chain is MFQWLMQALMLPLLLLPLGRAAPKDGVARLDPEVQQQLTPNPFQPGPEQLRHLQNYLKGLEKMEEDPEHMDREQVLLSLFALHDYDQNGQLDGLELLSMLTAALAPGAAHFPINPVILVVDSVLETQDLDGDGLMTPAELINFPEVPKHTESLPPALQEPQPAGSQPLLANSPLQSETQQSLGTKEEIRGQVEAKRASLEPEQEAGHQTEGKVDTLSPEEEARGQAESEGDVPGPREGAEEQVEIKDNEGEAKELLVETLESLNTPNEAEAHSIQLENDEI.

An N-terminal signal peptide occupies residues 1–21 (MFQWLMQALMLPLLLLPLGRA). 2 EF-hand domains span residues 71–106 (DREQ…ALAP) and 115–150 (PVIL…PKHT). Aspartate 84, aspartate 86, asparagine 88, glutamine 90, glutamate 95, aspartate 128, aspartate 130, aspartate 132, and glutamate 139 together coordinate Ca(2+). A disordered region spans residues 148–281 (KHTESLPPAL…HSIQLENDEI (134 aa)). A compositionally biased stretch (polar residues) spans 168–183 (LLANSPLQSETQQSLG). Basic and acidic residues predominate over residues 184-213 (TKEEIRGQVEAKRASLEPEQEAGHQTEGKV). Serine 217 and serine 228 each carry phosphoserine. Basic and acidic residues predominate over residues 237-256 (EGAEEQVEIKDNEGEAKELL).

Post-translationally, probably digested extracellularly by an unknown serine protease generating extremely hydrophobic bioactive peptides.

It is found in the secreted. Mediates cell-cell adhesion in a calcium-dependent manner. Able to inhibit growth in several cell lines. The protein is Cell growth regulator with EF hand domain protein 1 of Mus musculus (Mouse).